Reading from the N-terminus, the 309-residue chain is Olfactory receptor 2AP1 (309 aa).

Topologically, residues 1–23 are extracellular; that stretch reads MKNKTVLTEFILLGLTDVPELQV. A glycan (N-linked (GlcNAc...) asparagine) is linked at N3. Residues 24 to 47 form a helical membrane-spanning segment; the sequence is AVFTFLFLAYLLSILGNLTILILT. The Cytoplasmic segment spans residues 48–55; the sequence is LLDSHLQT. A helical transmembrane segment spans residues 56-77; the sequence is PMYFFLRNFSFLEISFTNIFIP. The Extracellular portion of the chain corresponds to 78 to 98; that stretch reads RVLISITTGNKSISFAGCFTQ. N87 carries N-linked (GlcNAc...) asparagine glycosylation. The cysteines at positions 95 and 187 are disulfide-linked. Residues 99–118 form a helical membrane-spanning segment; the sequence is YFFAMFLGATEFYLLAAMSY. The Cytoplasmic portion of the chain corresponds to 119–137; sequence DRYVAICKPLHYTTIMSSR. A helical membrane pass occupies residues 138 to 156; it reads ICIQLIFCSWLGGLMAIIP. The Extracellular segment spans residues 157-193; sequence TITLMSQQDFCASNRLNHYFCDYEPLLELSCSDTSLI. Residues 194 to 217 traverse the membrane as a helical segment; the sequence is EKVVFLVASVTLVVTLVLVILSYA. Over 218-234 the chain is Cytoplasmic; sequence FIIKTILKLPSAQQRTK. The chain crosses the membrane as a helical span at residues 235 to 257; sequence AFSTCSSHMIVISLSYGSCMFMY. At 258-270 the chain is on the extracellular side; that stretch reads INPSAKEGDTFNK. The helical transmembrane segment at 271–290 threads the bilayer; it reads GVALLITSVAPLLNPFIYTL. Residues 291–309 are Cytoplasmic-facing; the sequence is RNQQVKQPFKDMVKKLLNL.

Belongs to the G-protein coupled receptor 1 family.

It is found in the cell membrane. Functionally, odorant receptor. The sequence is that of Olfactory receptor 2AP1 (OR2AP1) from Homo sapiens (Human).